Reading from the N-terminus, the 128-residue chain is Aspartate 1-decarboxylase (128 aa).

The active-site Schiff-base intermediate with substrate; via pyruvic acid is serine 25. Position 25 is a pyruvic acid (Ser) (serine 25). Substrate is bound at residue threonine 57. Residue tyrosine 58 is the Proton donor of the active site. A substrate-binding site is contributed by 73 to 75; that stretch reads GAA.

This sequence belongs to the PanD family. As to quaternary structure, heterooctamer of four alpha and four beta subunits. The cofactor is pyruvate. In terms of processing, is synthesized initially as an inactive proenzyme, which is activated by self-cleavage at a specific serine bond to produce a beta-subunit with a hydroxyl group at its C-terminus and an alpha-subunit with a pyruvoyl group at its N-terminus.

The protein localises to the cytoplasm. The catalysed reaction is L-aspartate + H(+) = beta-alanine + CO2. The protein operates within cofactor biosynthesis; (R)-pantothenate biosynthesis; beta-alanine from L-aspartate: step 1/1. Its function is as follows. Catalyzes the pyruvoyl-dependent decarboxylation of aspartate to produce beta-alanine. This Caldicellulosiruptor saccharolyticus (strain ATCC 43494 / DSM 8903 / Tp8T 6331) protein is Aspartate 1-decarboxylase.